The primary structure comprises 336 residues: Polyprenyl transferase dpasC (336 aa).

A helical transmembrane segment spans residues 34-54 (LFTIFAGGMFLFVASFPTTAF). An N-linked (GlcNAc...) asparagine glycan is attached at asparagine 66. Transmembrane regions (helical) follow at residues 80–100 (ALCLSACYSFCGAGMVWNDWI), 125–145 (QAMLWMVFQMAVSWWLLHFML), 181–201 (YILGFTIAWPAVPGRTAIFHG), 205–225 (FAESVQACMPLLNMVFFWTIF), 253–273 (HVHLLLCLLLVPVAVCVPMYL), 274–294 (NQFHSTWLWVSWAGVWALSLL), and 311–331 (LHVDNFLLGAWTVVACTIELL).

Belongs to the UbiA prenyltransferase family. Requires Mg(2+) as cofactor.

The protein resides in the membrane. The protein operates within secondary metabolite biosynthesis; terpenoid biosynthesis. In terms of biological role, polyprenyl transferase; part of the gene cluster that mediates the biosynthesis of the diterpenoid pyrones subglutinols A and B. The first step of the pathway is the synthesis of the alpha-pyrone moiety by the polyketide synthase dpasA via condensation of one acetyl-CoA starter unit with 3 malonyl-CoA units and 2 methylations. The alpha-pyrone is then combined with geranylgeranyl pyrophosphate (GGPP) formed by the GGPP synthase dpasD through the action of the prenyltransferase dpasC to yield a linear alpha-pyrone diterpenoid. Subsequent steps in the diterpenoid pyrone biosynthetic pathway involve the decalin core formation, which is initiated by the epoxidation of the C10-C11 olefin by the FAD-dependent oxidoreductase dpasE, and is followed by a cyclization cascade catalyzed by the terpene cyclase dpasB. The FAD-linked oxidoreductase dpasF is then involved in tetrahydrofuran (THF) ring formation at the C5 unit to complete the formation of subglutinols A and B. DpasF possesses also an additional catalytic ability of multi-step oxidations to generate a new DDP analog with an enone system at the C5 named FDDP A. In Apiospora sacchari (Arthrinium sacchari), this protein is Polyprenyl transferase dpasC.